A 316-amino-acid chain; its full sequence is MDTIKIFNHGEFDTIRNELVNLLKVVKWNTINSNVTVSSTDTIDISDCIREILYKQFKNVRNIEVSSDISFIKYNRFNDTTLTDDNVGYYLVIYLNRTKSVKTLIYPTPETVITSSEDIMFSKSLNFRFENVKRDYKLVMCSISLTYKPSICRIQYDNNKYLDISDSQECNNLCYCVITMDPHHLIDLETICVLVDKSGKCLLVNEFYIRFRKNHIYNSFADLCMDHIFELPNTKELFTLRNDDGRNIAWDNDKLESGNNTWIPKTDDEYKFLSKLMNIAKFNNTKFDYYVLVGDTDPCTVFTFKVTKYYINLNYE.

Belongs to the poxviridae OPG031 protein family.

The protein resides in the host cytoplasm. The protein localises to the host nucleus. Plays a role in the inhibition of host NF-kappa-B activation. Mechanistically, blocks the subunit p65/RELA translocation into the host nucleus. The polypeptide is Protein C4 (OPG031) (Vaccinia virus (strain Western Reserve) (VACV)).